We begin with the raw amino-acid sequence, 179 residues long: ATP-dependent protease subunit HslV (179 aa).

The active site involves Thr9. Na(+) is bound by residues Ala164, Cys167, and Thr170.

The protein belongs to the peptidase T1B family. HslV subfamily. In terms of assembly, a double ring-shaped homohexamer of HslV is capped on each side by a ring-shaped HslU homohexamer. The assembly of the HslU/HslV complex is dependent on binding of ATP.

The protein resides in the cytoplasm. It catalyses the reaction ATP-dependent cleavage of peptide bonds with broad specificity.. Its activity is regulated as follows. Allosterically activated by HslU binding. Its function is as follows. Protease subunit of a proteasome-like degradation complex believed to be a general protein degrading machinery. The sequence is that of ATP-dependent protease subunit HslV from Syntrophobacter fumaroxidans (strain DSM 10017 / MPOB).